Here is a 590-residue protein sequence, read N- to C-terminus: MERGPQMANRIEGKAVDKTSIKHFVKLIRAAKPRYLFFVIGIVAGIIGTLIQLQVPKMVQPLINSFGHGVNGGKVALVIALYIGSAAVSAIAAIVLGIFGESVVKNLRTRVWDKMIHLPVKYFDEVKTGEMSSRLANDTTQVKNLIANSIPQAFTSILLLVGSIIFMLQMQWRLTLAMIIAVPIVMLIMFPIMTFGQKIGWTRQDSLANFQGIASESLSEIRLVKSSNAEKQASKKAENDVNALYKIGVKEAVFDGLMSPVMMLSMMLMIFGLLAYGIYLISTGVMSLGTLLGMMMYLMNLIGVVPTVATFFTELAKASGSTGRLTELLDEEQEVLHQGDSLDLEGKTLSAHHVDFAYDDSEQILHDISFEAQPNSIIAFAGPSGGGKSTIFSLLERFYQPTAGEITIGGQPIDSVSLENWRSQIGFVSQDSAIMAGTIRENLTYGLEGNFTDEDLWQVLDLAFARSFVENMPDQLNTEVGERGVKISGGQRQRLAIARAFLRNPKILMLDEATASLDSESESMVQRALDSLMKGRTTLVIAHRLSTIVDADKIYFIEKGEITGSGKHNELVATHPLYAKYVSEQLTVGQ.

Transmembrane regions (helical) follow at residues 35 to 55, 79 to 99, 150 to 170, 176 to 196, 261 to 281, and 292 to 312; these read YLFF…QLQV, IALY…LGIF, IPQA…MLQM, LAMI…MTFG, VMML…IYLI, and LGMM…ATFF. One can recognise an ABC transmembrane type-1 domain in the interval 38–317; it reads FVIGIVAGII…VATFFTELAK (280 aa). Residues 349 to 584 enclose the ABC transporter domain; it reads LSAHHVDFAY…HPLYAKYVSE (236 aa). 382-389 contributes to the ATP binding site; it reads GPSGGGKS.

The protein belongs to the ABC transporter superfamily. Multidrug exporter LmrA (TC 3.A.1.117.1) family. Homodimer.

The protein resides in the cell membrane. The enzyme catalyses ATP + H2O + xenobioticSide 1 = ADP + phosphate + xenobioticSide 2.. Its function is as follows. Efflux transporter for a variety of amphiphilic cationic compounds, including antibiotics. The chain is Multidrug resistance ABC transporter ATP-binding and permease protein (lmrA) from Lactococcus lactis subsp. cremoris (strain MG1363).